A 150-amino-acid chain; its full sequence is Peptide deformylase 1 (150 aa).

Residues cysteine 88 and histidine 130 each contribute to the Fe cation site. Glutamate 131 is an active-site residue. A Fe cation-binding site is contributed by histidine 134.

This sequence belongs to the polypeptide deformylase family. The cofactor is Fe(2+).

It carries out the reaction N-terminal N-formyl-L-methionyl-[peptide] + H2O = N-terminal L-methionyl-[peptide] + formate. Its function is as follows. Removes the formyl group from the N-terminal Met of newly synthesized proteins. Requires at least a dipeptide for an efficient rate of reaction. N-terminal L-methionine is a prerequisite for activity but the enzyme has broad specificity at other positions. The polypeptide is Peptide deformylase 1 (Clostridium acetobutylicum (strain ATCC 824 / DSM 792 / JCM 1419 / IAM 19013 / LMG 5710 / NBRC 13948 / NRRL B-527 / VKM B-1787 / 2291 / W)).